Here is a 510-residue protein sequence, read N- to C-terminus: GMP synthase [glutamine-hydrolyzing] (510 aa).

The Glutamine amidotransferase type-1 domain maps to 5-195; the sequence is LVFIIDFGGQ…LFNICELKGD (191 aa). Cys-82 (nucleophile) is an active-site residue. Active-site residues include His-169 and Glu-171. The GMPS ATP-PPase domain occupies 196–385; the sequence is WSVTSFAEEK…LGIPHKLVWR (190 aa). 223–229 contacts ATP; that stretch reads SGGVDSS.

Homodimer.

The catalysed reaction is XMP + L-glutamine + ATP + H2O = GMP + L-glutamate + AMP + diphosphate + 2 H(+). The protein operates within purine metabolism; GMP biosynthesis; GMP from XMP (L-Gln route): step 1/1. In terms of biological role, catalyzes the synthesis of GMP from XMP. This chain is GMP synthase [glutamine-hydrolyzing], found in Clostridium tetani (strain Massachusetts / E88).